The primary structure comprises 194 residues: Ribonuclease HII (194 aa).

An RNase H type-2 domain is found at 3-193; sequence ILTAGVDEAG…VRNLFAQQAL (191 aa). Aspartate 9, glutamate 10, and aspartate 101 together coordinate a divalent metal cation.

Belongs to the RNase HII family. Mn(2+) serves as cofactor. The cofactor is Mg(2+).

The protein resides in the cytoplasm. It catalyses the reaction Endonucleolytic cleavage to 5'-phosphomonoester.. In terms of biological role, endonuclease that specifically degrades the RNA of RNA-DNA hybrids. The polypeptide is Ribonuclease HII (Neisseria meningitidis serogroup C / serotype 2a (strain ATCC 700532 / DSM 15464 / FAM18)).